A 1759-amino-acid chain; its full sequence is MDCKENGVGDASGCNIDANSLASNLAMNTNEDFYEKLSSRGQNLDSVSSLEIPQTASSVNHTIEGQRKCFTEIEQMGYGNSNSQEDAGNTDDDLYVCYNADDTQEQGVVSGELEQSQELICDTDLLVNCNKLDDGKESQDTNVSLVSIFSGSMQEKEAPQAKEDEGYGGTTLPIGGSGIDTESTFVNDAPEQFESLETTKHIKPDEVESDGISYRFDDGGKEGRNGPSSDLDTGSSDDISLSQSFSFPDSLLDSSVFGCSATESYLEDAIDIEGNGTIVVSPSLAITEMLNNDDGGLCSHDLNKITVTETINPDLKLVREDRLDTDLSVMNEKMLKNHVGDSSSESAVAALSMNNGMAADLRAENFSQSSPIDEKTLDMEANSPITDSSLIWNFPLNFGSGGIEVCNPENAVEPLRIVDDNGRIGGEVASASGSDFCEAGMSSSRRKARDGKQCKVVQTKTSARHLRKSSRKKQSERDIESIFKCSKQKRSSLLKTSRSSEWGLPSKTTEIFLQSNNIPYDGPPHHEPQRSQGNLNNGEHNRSSHNGNVEGSNRNIQASSGSCLRLKVKFGKSGGQNPLNITVSKVSGNSLPGNGIVKAGTCLELPGSAHFGEDKMQTVETKEDLVEKSNPVEKVSYLQSSDSMRDKKYNQDAGGLCRKVGGDVLDDDPHLSSIRMVEECERATGTQSLDAETSPDSEVINSVPDSIVNIEHKEGLHHGFFSTPEDVVKKNRVLEKEDELRASKSPSENGSHLIPNAKKAKHPKSKSNGTKKGKSKFSESAKDGRKNESHEGVEQRKSLNTSMGRDDSDYPEVGRIESHKTTGALLDADIGKTSATYGTISSDVTHGEMVVDVTIEDSYSTESAWVRCDDCFKWRRIPASVVGSIDESSRWICMNNSDKRFADCSKSQEMSNEEINEELGIGQDEADAYDCDAAKRGKEKEQKSKRLTGKQKACFKAIKTNQFLHRNRKSQTIDEIMVCHCKPSPDGRLGCGEECLNRMLNIECLQGTCPAGDLCSNQQFQKRKYVKFERFQSGKKGYGLRLLEDVREGQFLIEYVGEVLDMQSYETRQKEYAFKGQKHFYFMTLNGNEVIDAGAKGNLGRFINHSCEPNCRTEKWMVNGEICVGIFSMQDLKKGQELTFDYNYVRVFGAAAKKCYCGSSHCRGYIGGDPLNGDVIIQSDSDEEYPELVILDDDESGEGILGATSRTFTDDADEQMPQSFEKVNGYKDLAPDNTQTQSSVSVKLPEREIPPPLLQPTEVLKELSSGISITAVQQEVPAEKKTKSTSPTSSSLSRMSPGGTNSDKTTKHGSGEDKKILPRPRPRMKTSRSSESSKRDKGGIYPGVNKAQVIPVNKLQQQPIKSKGSEKVSPSIETFEGKLNELLDAVGGISKRRDSAKGYLKLLLLTAASRGTDEEGIYSNRDLSMILDALLKTKSKSVLVDIINKNGPFAGMESFKDSVLSFTEHDDYTVHNIARSFRDRWIPKHFRKPWRINREERSESMRSPINRRFRASQEPRYDHQSPRPAEPAASVTSSKAATPETASVSEGYSEPNSGLPETNGRKRKSRWDQPSKTKEQRIMTILSQQTDETNGNQDVQDDLPPGFSSPCTDVPDAITAQPQQKFLSRLPVSYGIPLSIVHQFGSPGKEDPTTWSVAPGMPFYPFPPLPPVSHGEFFAKRNVRACSSSMGNLTYSNEILPATPVTDSTAPTRKRELFSSDIGTTYFRQQKQSVPPWLRNNGGEKTANSPIPGNLTLEKKLNS.

Composition is skewed to basic and acidic residues over residues 154–165 (QEKEAPQAKEDE), 197–206 (ETTKHIKPDE), and 215–224 (RFDDGGKEGR). Disordered regions lie at residues 154 to 181 (QEKE…GIDT), 197 to 237 (ETTK…GSSD), 437 to 482 (CEAG…IESI), 515 to 556 (SNNI…NRNI), and 738 to 816 (DELR…VGRI). Positions 462-472 (SARHLRKSSRK) are enriched in basic residues. Positions 530-556 (RSQGNLNNGEHNRSSHNGNVEGSNRNI) are enriched in polar residues. The span at 758-775 (KKAKHPKSKSNGTKKGKS) shows a compositional bias: basic residues. 2 stretches are compositionally biased toward basic and acidic residues: residues 776-797 (KFSE…EQRK) and 804-816 (GRDD…VGRI). The CW-type zinc-finger motif lies at 859 to 912 (YSTESAWVRCDDCFKWRRIPASVVGSIDESSRWICMNNSDKRFADCSKSQEMSN). Residues C868, C871, C893, and C904 each contribute to the Zn(2+) site. In terms of domain architecture, AWS spans 974 to 1024 (DEIMVCHCKPSPDGRLGCGEECLNRMLNIECLQGTCPAGDLCSNQQFQKRK). Positions 1026–1143 (VKFERFQSGK…KGQELTFDYN (118 aa)) constitute an SET domain. Residue Y1142 coordinates S-adenosyl-L-methionine. Residues 1151–1167 (AAKKCYCGSSHCRGYIG) form the Post-SET domain. Disordered stretches follow at residues 1225–1253 (GYKD…PPPL), 1271–1345 (AVQQ…PGVN), 1496–1606 (ERSE…FSSP), and 1727–1759 (KQSV…KLNS). Over residues 1232–1241 (DNTQTQSSVS) the composition is skewed to polar residues. Low complexity predominate over residues 1284–1293 (STSPTSSSLS). Residues 1304–1316 (KTTKHGSGEDKKI) show a composition bias toward basic and acidic residues. The segment covering 1317 to 1326 (LPRPRPRMKT) has biased composition (basic residues). Residues 1511–1521 (ASQEPRYDHQS) show a composition bias toward basic and acidic residues. The span at 1530-1556 (SVTSSKAATPETASVSEGYSEPNSGLP) shows a compositional bias: polar residues. A compositionally biased stretch (basic and acidic residues) spans 1566-1577 (RWDQPSKTKEQR). Residues 1581–1594 (ILSQQTDETNGNQD) are compositionally biased toward polar residues.

It belongs to the class V-like SAM-binding methyltransferase superfamily. Histone-lysine methyltransferase family. SET2 subfamily. Interacts with FRI and SUF4, two components of the transcription activator complex FRI-C, and with SWC6, a component of the SWR1 chromatin-remodeling complex. Interacts with BZR2/BES1 and IWS1. In terms of tissue distribution, ubiquitous, with higher levels in young tissues, including shoot and root apex. Expressed in ovules, tapetum layer and microspores.

Its subcellular location is the nucleus. It localises to the chromosome. The protein resides in the centromere. It carries out the reaction N(6)-methyl-L-lysyl(36)-[histone H3] + S-adenosyl-L-methionine = N(6),N(6)-dimethyl-L-lysyl(36)-[histone H3] + S-adenosyl-L-homocysteine + H(+). It catalyses the reaction N(6),N(6)-dimethyl-L-lysyl(36)-[histone H3] + S-adenosyl-L-methionine = N(6),N(6),N(6)-trimethyl-L-lysyl(36)-[histone H3] + S-adenosyl-L-homocysteine + H(+). Its function is as follows. Histone methyltransferase involved in di and tri-methylation of 'Lys-36' of histone H3 (H3K36me2 and H3K36me3). Binds to H3 already mono- or di-methylated on 'Lys-4'(H3K4me1 or H3K4me2), but not to H3K4me3. H3K4me and H3K36me represent specific tags for epigenetic transcriptional activation. Positively regulates FLC transcription to prevent early flowering transition. Required for flowering transition in response to vernalization and for the maintenance of FLC expression in late embryos, but dispensable for the initial reactivation in early embryos during reprogramming. Also seems to modulate several traits including floral organ size, root size and dormancy. Promotes apical dominance. Directly involved in the tri-methylation of 'Lys-36' of histone H3 (H3K36me3) at LAZ5 chromatin to maintain a transcriptionally active state of LAZ5, a TIR-NB-LRR protein involved in innate immunity. Required for brassinosteroid (BR)-induced gene expression and histone H3 trimethylation on 'Lys-36' (H3K36me3) in BR-regulated genes. The sequence is that of Histone-lysine N-methyltransferase ASHH2 from Arabidopsis thaliana (Mouse-ear cress).